Reading from the N-terminus, the 31-residue chain is MEVNILAFIATALLILVPTAFLLIIYVKTAK.

A helical transmembrane segment spans residues 5–25; it reads ILAFIATALLILVPTAFLLII.

Belongs to the PsbM family. PSII is composed of 1 copy each of membrane proteins PsbA, PsbB, PsbC, PsbD, PsbE, PsbF, PsbH, PsbI, PsbJ, PsbK, PsbL, PsbM, PsbT, PsbX, PsbY, PsbZ, Psb30/Ycf12, at least 3 peripheral proteins of the oxygen-evolving complex and a large number of cofactors. It forms dimeric complexes.

The protein localises to the plastid membrane. One of the components of the core complex of photosystem II (PSII). PSII is a light-driven water:plastoquinone oxidoreductase that uses light energy to abstract electrons from H(2)O, generating O(2) and a proton gradient subsequently used for ATP formation. It consists of a core antenna complex that captures photons, and an electron transfer chain that converts photonic excitation into a charge separation. This subunit is found at the monomer-monomer interface. The sequence is that of Photosystem II reaction center protein M from Cuscuta exaltata (Tall dodder).